The chain runs to 408 residues: 1-deoxy-D-xylulose 5-phosphate reductoisomerase (408 aa).

Positions 26, 27, 28, 29, and 143 each coordinate NADPH. 1-deoxy-D-xylulose 5-phosphate is bound at residue Lys-144. NADPH is bound at residue Glu-145. Asp-167 contacts Mn(2+). 1-deoxy-D-xylulose 5-phosphate-binding residues include Ser-168, Glu-169, Ser-193, and His-216. Glu-169 is a binding site for Mn(2+). Gly-222 is a binding site for NADPH. Residues Ser-229, Asn-234, Lys-235, and Glu-238 each contribute to the 1-deoxy-D-xylulose 5-phosphate site. Glu-238 is a Mn(2+) binding site.

The protein belongs to the DXR family. It depends on Mg(2+) as a cofactor. The cofactor is Mn(2+).

The enzyme catalyses 2-C-methyl-D-erythritol 4-phosphate + NADP(+) = 1-deoxy-D-xylulose 5-phosphate + NADPH + H(+). Its pathway is isoprenoid biosynthesis; isopentenyl diphosphate biosynthesis via DXP pathway; isopentenyl diphosphate from 1-deoxy-D-xylulose 5-phosphate: step 1/6. Its function is as follows. Catalyzes the NADPH-dependent rearrangement and reduction of 1-deoxy-D-xylulose-5-phosphate (DXP) to 2-C-methyl-D-erythritol 4-phosphate (MEP). The polypeptide is 1-deoxy-D-xylulose 5-phosphate reductoisomerase (Corynebacterium jeikeium (strain K411)).